We begin with the raw amino-acid sequence, 20 residues long: Alpha-conotoxin-like ts14a (20 aa).

Disulfide bonds link Cys3/Cys16 and Cys14/Cys20.

In terms of tissue distribution, expressed by the venom duct.

The protein resides in the secreted. Its function is as follows. Alpha-conotoxins act on postsynaptic membranes, they bind to the nicotinic acetylcholine receptors (nAChR) and thus inhibit them. This chain is Alpha-conotoxin-like ts14a, found in Conus tessulatus (Tessellate cone).